The sequence spans 186 residues: Protein Syd (186 aa).

The protein belongs to the Syd family.

It localises to the cell inner membrane. In terms of biological role, interacts with the SecY protein in vivo. May bind preferentially to an uncomplexed state of SecY, thus functioning either as a chelating agent for excess SecY in the cell or as a regulatory factor that negatively controls the translocase function. This chain is Protein Syd, found in Erwinia tasmaniensis (strain DSM 17950 / CFBP 7177 / CIP 109463 / NCPPB 4357 / Et1/99).